The sequence spans 456 residues: Exodeoxyribonuclease 7 large subunit (456 aa).

It belongs to the XseA family. As to quaternary structure, heterooligomer composed of large and small subunits.

It localises to the cytoplasm. The catalysed reaction is Exonucleolytic cleavage in either 5'- to 3'- or 3'- to 5'-direction to yield nucleoside 5'-phosphates.. Bidirectionally degrades single-stranded DNA into large acid-insoluble oligonucleotides, which are then degraded further into small acid-soluble oligonucleotides. In Lactobacillus johnsonii (strain CNCM I-12250 / La1 / NCC 533), this protein is Exodeoxyribonuclease 7 large subunit.